Reading from the N-terminus, the 62-residue chain is Large ribosomal subunit protein uL29 (62 aa).

Belongs to the universal ribosomal protein uL29 family.

In Acholeplasma laidlawii (strain PG-8A), this protein is Large ribosomal subunit protein uL29.